We begin with the raw amino-acid sequence, 517 residues long: Maturase K (517 aa).

This sequence belongs to the intron maturase 2 family. MatK subfamily.

The protein localises to the plastid. It is found in the chloroplast. In terms of biological role, usually encoded in the trnK tRNA gene intron. Probably assists in splicing its own and other chloroplast group II introns. The protein is Maturase K of Acer pseudoplatanus (Sycamore maple).